An 878-amino-acid polypeptide reads, in one-letter code: Aconitase htyD (878 aa).

Substrate-binding positions include Gln-173 and 290–292 (DSH). [4Fe-4S] cluster-binding residues include Cys-472, Cys-535, and Cys-538. Residues Arg-558 and Arg-563 each contribute to the substrate site. The segment at 626-671 (IAIANQRTKPAPTMPAYVEPYRSFQPPVPPSSDQPQSMKDHGKTSN) is disordered. Residue 742-743 (SR) participates in substrate binding.

The protein belongs to the aconitase/IPM isomerase family.

It functions in the pathway antifungal biosynthesis. In terms of biological role, aconitase; part of the gene cluster that mediates the de novo generation of L-homotyrosine from acetyl-CoA and 4-hydroxyphenyl-pyruvate. L-homotyrosine is a building block of echinocandin B, a fungal lipidated cyclic hexapeptide that acts as an antifungal agent. L-homotyrosine 4-hydroxyphenyl-pyruvate first undergoes an aldol-type condensation by htyA with the C-2 of acetyl-CoA followed by the release of CoA to form 2-(4-hydroxybenzyl)-malate. This is followed by isomerization of 2-(4-hydroxy-benzyl)-malate to 3-(4-hydroxybenzyl)-malate by htyD. Thereafter, 3-(4-hydroxybenzyl)-malate undergoes decarboxylation and oxidation to form 2-oxo-4-(4-hydroxybenzyl)butanoic acid, coupled to reduction of NAD(+) to NADH by htyC. The product then undergoes transamination catalyzed by htyB to form L-homotyrosine. The chain is Aconitase htyD from Aspergillus rugulosus (Emericella rugulosa).